The primary structure comprises 120 residues: Large ribosomal subunit protein bL12 (120 aa).

This sequence belongs to the bacterial ribosomal protein bL12 family. Homodimer. Part of the ribosomal stalk of the 50S ribosomal subunit. Forms a multimeric L10(L12)X complex, where L10 forms an elongated spine to which 2 to 4 L12 dimers bind in a sequential fashion. Binds GTP-bound translation factors.

In terms of biological role, forms part of the ribosomal stalk which helps the ribosome interact with GTP-bound translation factors. Is thus essential for accurate translation. This is Large ribosomal subunit protein bL12 from Lachnoclostridium phytofermentans (strain ATCC 700394 / DSM 18823 / ISDg) (Clostridium phytofermentans).